A 353-amino-acid polypeptide reads, in one-letter code: Paraxanthine methyltransferase 2 (353 aa).

S-adenosyl-L-methionine is bound at residue Y18. Substrate is bound by residues Y18 and 21 to 25 (QSSYQ). S-adenosyl-L-methionine contacts are provided by residues G59, 59 to 60 (GC), N65, 99 to 102 (FNDL), 128 to 130 (SFF), and 145 to 147 (SYA). 146 to 150 (YAFLF) is a binding site for substrate. Mg(2+)-binding residues include N167, D252, and F254. Substrate contacts are provided by S301 and Y306.

The protein belongs to the methyltransferase superfamily. SABATH family. In terms of assembly, homodimer. It depends on Mg(2+) as a cofactor.

The protein is Paraxanthine methyltransferase 2 of Arabidopsis thaliana (Mouse-ear cress).